A 93-amino-acid chain; its full sequence is MADITDIKTILYTEKSLNLQEQGVVVIQTSPKMTKTGLKAVLKEYFGVTPKSINSLRMDGKVKRFRGRLGQRNDYKKFYVKLPEGVSLENTEA.

Belongs to the universal ribosomal protein uL23 family. Part of the 50S ribosomal subunit. Contacts protein L29, and trigger factor when it is bound to the ribosome.

In terms of biological role, one of the early assembly proteins it binds 23S rRNA. One of the proteins that surrounds the polypeptide exit tunnel on the outside of the ribosome. Forms the main docking site for trigger factor binding to the ribosome. The polypeptide is Large ribosomal subunit protein uL23 (Campylobacter jejuni subsp. jejuni serotype O:6 (strain 81116 / NCTC 11828)).